Reading from the N-terminus, the 122-residue chain is Putative TLX1 neighbor protein (122 aa).

The segment at 21-122 (SLLSQEAMGP…LGGGRGQRGQ (102 aa)) is disordered. Over residues 113–122 (LGGGRGQRGQ) the composition is skewed to gly residues.

This is Putative TLX1 neighbor protein (TLX1NB) from Homo sapiens (Human).